The chain runs to 95 residues: Co-chaperonin GroES (95 aa).

Belongs to the GroES chaperonin family. In terms of assembly, heptamer of 7 subunits arranged in a ring. Interacts with the chaperonin GroEL.

It localises to the cytoplasm. In terms of biological role, together with the chaperonin GroEL, plays an essential role in assisting protein folding. The GroEL-GroES system forms a nano-cage that allows encapsulation of the non-native substrate proteins and provides a physical environment optimized to promote and accelerate protein folding. GroES binds to the apical surface of the GroEL ring, thereby capping the opening of the GroEL channel. In Chlorobium luteolum (strain DSM 273 / BCRC 81028 / 2530) (Pelodictyon luteolum), this protein is Co-chaperonin GroES.